The following is a 118-amino-acid chain: ATP synthase subunit gamma, chloroplastic (118 aa).

A disulfide bond links Cys30 and Cys36.

The protein belongs to the ATPase gamma chain family. In terms of assembly, F-type ATPases have 2 components, CF(1) - the catalytic core - and CF(0) - the membrane proton channel. CF(1) has five subunits: alpha(3), beta(3), gamma(1), delta(1), epsilon(1). CF(0) has four main subunits: a, b, b' and c.

The protein localises to the plastid. Its subcellular location is the chloroplast thylakoid membrane. Produces ATP from ADP in the presence of a proton gradient across the membrane. The gamma chain is believed to be important in regulating ATPase activity and the flow of protons through the CF(0) complex. Its function is as follows. Inceptin is a proteolytic fragment produced by insect larvae that previously ingested the protein. This peptide mediate plant perception of herbivory through the induction of volatile, phenylpropanoid and protease inhibitor defenses such as ethylene, jasmonic acid and salicylic acid for example. This Vigna unguiculata (Cowpea) protein is ATP synthase subunit gamma, chloroplastic.